Here is a 103-residue protein sequence, read N- to C-terminus: Small ribosomal subunit protein uS10 (103 aa).

It belongs to the universal ribosomal protein uS10 family. As to quaternary structure, part of the 30S ribosomal subunit.

In terms of biological role, involved in the binding of tRNA to the ribosomes. This chain is Small ribosomal subunit protein uS10, found in Chlorobaculum parvum (strain DSM 263 / NCIMB 8327) (Chlorobium vibrioforme subsp. thiosulfatophilum).